A 460-amino-acid polypeptide reads, in one-letter code: Elongation factor 1-alpha (460 aa).

Glycine 2 carries the post-translational modification N,N,N-trimethylglycine. The residue at position 3 (lysine 3) is an N6,N6-dimethyllysine; alternate. N6-methyllysine; alternate is present on lysine 3. The region spanning 6 to 241 (KTHINVVVIG…DAIEPPKRPT (236 aa)) is the tr-type G domain. A G1 region spans residues 15–22 (GHVDSGKS). 15 to 22 (GHVDSGKS) serves as a coordination point for GTP. Position 31 is an N6-methyllysine (lysine 31). The tract at residues 71–75 (GITID) is G2. Lysine 80 is modified (N6,N6,N6-trimethyllysine). The tract at residues 92-95 (DAPG) is G3. GTP is bound by residues 92–96 (DAPGH) and 154–157 (NKMD). The tract at residues 154-157 (NKMD) is G4. The tract at residues 193 to 195 (SGF) is G5. N6,N6-dimethyllysine; alternate is present on lysine 317. Lysine 317 is modified (N6-methyllysine; alternate). Lysine 391 carries the post-translational modification N6-methyllysine.

This sequence belongs to the TRAFAC class translation factor GTPase superfamily. Classic translation factor GTPase family. EF-Tu/EF-1A subfamily.

It is found in the cytoplasm. In terms of biological role, this protein promotes the GTP-dependent binding of aminoacyl-tRNA to the A-site of ribosomes during protein biosynthesis. This chain is Elongation factor 1-alpha (tef-1), found in Neurospora crassa (strain ATCC 24698 / 74-OR23-1A / CBS 708.71 / DSM 1257 / FGSC 987).